We begin with the raw amino-acid sequence, 221 residues long: UPF0758 protein YicR (221 aa).

Residues 99 to 221 enclose the MPN domain; it reads ALLSPEMTRE…YVSFAERGWI (123 aa). Positions 170, 172, and 183 each coordinate Zn(2+). The JAMM motif signature appears at 170–183; the sequence is HNHPSGCAEPSKAD.

Belongs to the UPF0758 family. YicR subfamily.

In Salmonella agona (strain SL483), this protein is UPF0758 protein YicR.